Reading from the N-terminus, the 1278-residue chain is NPC intracellular cholesterol transporter 1 (1278 aa).

The first 22 residues, 1–22 (MTARGLALGLLLLLLCPAQVFS), serve as a signal peptide directing secretion. The Lumenal portion of the chain corresponds to 23-261 (QSCVWYGECG…QPPPPPAPWT (239 aa)). Disulfide bonds link cysteine 25–cysteine 74, cysteine 31–cysteine 42, cysteine 63–cysteine 109, cysteine 75–cysteine 113, cysteine 97–cysteine 238, cysteine 100–cysteine 160, cysteine 177–cysteine 184, cysteine 227–cysteine 243, and cysteine 240–cysteine 247. Asparagine 41 is a binding site for cholesterol. Residue asparagine 70 is glycosylated (N-linked (GlcNAc...) asparagine). Glutamine 79 is a binding site for cholesterol. N-linked (GlcNAc...) asparagine glycosylation is found at asparagine 122 and asparagine 135. Asparagine 158 carries an N-linked (GlcNAc...) asparagine; atypical glycan. Residues 175-205 (LLCGKDADACNATNWIEYMFNKDNGQAPFTI) are important for cholesterol binding and cholesterol transfer from NPC1 to liposomes. Residues asparagine 185 and asparagine 222 are each glycosylated (N-linked (GlcNAc...) asparagine). Residues 262–282 (ILGLDAMYVIMWITYMAFLLV) form a helical membrane-spanning segment. Topologically, residues 283 to 350 (FFGAFFAVWC…RWGSFCVRNP (68 aa)) are cytoplasmic. Residues 351–371 (GCVIFFSLVFITACSSGLVFV) form a helical membrane-spanning segment. At 372-620 (RVTTNPVDLW…DELNRESDSD (249 aa)) the chain is on the lumenal side. N-linked (GlcNAc...) asparagine glycosylation is found at asparagine 452, asparagine 459, asparagine 478, asparagine 524, asparagine 557, asparagine 572, and asparagine 598. 2 cysteine pairs are disulfide-bonded: cysteine 468–cysteine 479 and cysteine 516–cysteine 533. The 166-residue stretch at 620 to 785 (DVFTVVISYA…ITCFVSLLGL (166 aa)) folds into the SSD domain. A helical transmembrane segment spans residues 621–641 (VFTVVISYAIMFLYISLALGH). Topologically, residues 642 to 653 (MKSCRRLLVDSK) are cytoplasmic. The helical transmembrane segment at 654–675 (VSLGIAGILIVLSSVACSLGVF) threads the bilayer. Residues 676 to 685 (SYIGLPLTLI) are Lumenal-facing. A helical membrane pass occupies residues 686-706 (VIEVIPFLVLAVGVDNIFILV). The Cytoplasmic segment spans residues 707–730 (QAYQRDERLQGETLDQQLGRVLGE). Residues 731–751 (VAPSMFLSSFSETVAFFLGAL) traverse the membrane as a helical segment. Residues 752–759 (SVMPAVHT) are Lumenal-facing. The chain crosses the membrane as a helical span at residues 760–783 (FSLFAGLAVFIDFLLQITCFVSLL). Over 784–832 (GLDIKRQEKNRLDIFCCVRGAEDGTSVQASESCLFRFFKNSYSPLLLKD) the chain is Cytoplasmic. A helical transmembrane segment spans residues 833–853 (WMRPIVIAIFVGVLSFSIAVL). Residues 854 to 1097 (NKVDIGLDQS…YEQYLTIIDD (244 aa)) lie on the Lumenal side of the membrane. Cysteine 909 and cysteine 914 are joined by a disulfide. N-linked (GlcNAc...) asparagine glycosylation is found at asparagine 916, asparagine 931, asparagine 961, asparagine 968, asparagine 1064, and asparagine 1072. 3 disulfide bridges follow: cysteine 956–cysteine 1011, cysteine 957–cysteine 979, and cysteine 967–cysteine 976. Residues 1098 to 1118 (TIFNLGVSLGAIFLVTMVLLG) traverse the membrane as a helical segment. Over 1119–1124 (CELWSA) the chain is Cytoplasmic. Residues 1125 to 1145 (VIMCATIAMVLVNMFGVMWLW) form a helical membrane-spanning segment. Residues 1146-1150 (GISLN) are Lumenal-facing. Residues 1151-1171 (AVSLVNLVMSCGISVEFCSHI) traverse the membrane as a helical segment. The Cytoplasmic segment spans residues 1172 to 1194 (TRAFTVSMKGSRVERAEEALAHM). The helical transmembrane segment at 1195 to 1215 (GSSVFSGITLTKFGGIVVLAF) threads the bilayer. Topologically, residues 1216-1223 (AKSQIFQI) are lumenal. Residues 1224 to 1244 (FYFRMYLAMVLLGATHGLIFL) form a helical membrane-spanning segment. At 1245–1278 (PVLLSYIGPSVNKAKSCATEERYKGTERERLLNF) the chain is on the cytoplasmic side. Residues 1275-1278 (LLNF) are required for location in lysosomes. Residues 1275–1278 (LLNF) carry the Di-leucine motif motif.

The protein belongs to the patched family. As to quaternary structure, interacts (via the second lumenal domain) with NPC2. Interacts with TMEM97; the interaction may decrease NPC1 availability to the cell. Interacts with TIM1. Interacts with SLC38A9; this interaction inhibits cholesterol-mediated mTORC1 activation via its sterol transport activity. In terms of assembly, (Microbial infection) Interacts with ebolavirus glycoprotein. Post-translationally, N-glycosylated.

The protein resides in the late endosome membrane. It is found in the lysosome membrane. The catalysed reaction is cholesterol(in) = cholesterol(out). Functionally, intracellular cholesterol transporter which acts in concert with NPC2 and plays an important role in the egress of cholesterol from the endosomal/lysosomal compartment. Unesterified cholesterol that has been released from LDLs in the lumen of the late endosomes/lysosomes is transferred by NPC2 to the cholesterol-binding pocket in the N-terminal domain of NPC1. Cholesterol binds to NPC1 with the hydroxyl group buried in the binding pocket. Binds oxysterol with higher affinity than cholesterol. May play a role in vesicular trafficking in glia, a process that may be crucial for maintaining the structural and functional integrity of nerve terminals. Inhibits cholesterol-mediated mTORC1 activation throught its interaction with SLC38A9. In terms of biological role, (Microbial infection) Acts as an endosomal entry receptor for ebolavirus. The polypeptide is NPC intracellular cholesterol transporter 1 (Homo sapiens (Human)).